The chain runs to 173 residues: Translationally-controlled tumor protein homolog (173 aa).

One can recognise a TCTP domain in the interval 1–173 (MIIYKDILTG…WKHGLEEYKV (173 aa)).

This sequence belongs to the TCTP family.

The protein localises to the cytoplasm. The protein resides in the cytoskeleton. In terms of biological role, involved in protein synthesis. Involved in microtubule stabilization. The sequence is that of Translationally-controlled tumor protein homolog from Aspergillus oryzae (strain ATCC 42149 / RIB 40) (Yellow koji mold).